The following is a 211-amino-acid chain: MSRVQISTVLAIDTATPAVTAGIVRRHDLVVLGERVTVDARAHAERLTPNVLAALADAALTMADLDAVVVGCGPGPFTGLRAGMASAAAYGHALGIPVYGVCSLDAIGGQTIGDTLVVTDARRREVYWARYCDGIRTVGPAVNAAADVDPGPALAVAGAPEHAALFALPCVEPSRPSPAGLVAAVNWADKPAPLVPLYLRRPDAKPLAVCT.

The N-terminal stretch at 1 to 20 (MSRVQISTVLAIDTATPAVT) is a signal peptide.

The protein to M.leprae ML0378.

This is an uncharacterized protein from Mycobacterium tuberculosis (strain CDC 1551 / Oshkosh).